Here is a 330-residue protein sequence, read N- to C-terminus: tRNA (guanine(37)-N(1))-methyltransferase Trm5b (330 aa).

Residues Arg-173, 211 to 212, 238 to 239, and Asn-252 contribute to the S-adenosyl-L-methionine site; these read DI and DS.

The protein belongs to the class I-like SAM-binding methyltransferase superfamily. TRM5/TYW2 family.

The protein localises to the cytoplasm. It catalyses the reaction guanosine(37) in tRNA + S-adenosyl-L-methionine = N(1)-methylguanosine(37) in tRNA + S-adenosyl-L-homocysteine + H(+). Specifically methylates the N1 position of guanosine-37 in various tRNAs. The protein is tRNA (guanine(37)-N(1))-methyltransferase Trm5b of Pyrococcus abyssi (strain GE5 / Orsay).